A 1162-amino-acid chain; its full sequence is Spike glycoprotein (1162 aa).

A signal peptide spans 1-18; sequence MLVTPLLLVTLLCALCSA. The Extracellular portion of the chain corresponds to 19–1095; it reads ALYDSSSYVY…LKTYIKWPWY (1077 aa). N-linked (GlcNAc...) asparagine; by host glycans are attached at residues Asn-51, Asn-77, Asn-103, Asn-144, Asn-163, Asn-178, Asn-212, Asn-237, Asn-247, Asn-264, Asn-271, Asn-276, Asn-306, Asn-425, Asn-447, Asn-513, Asn-530, Asn-579, Asn-591, Asn-669, Asn-676, and Asn-714. Residues 769–874 form a heptad repeat 1 (HR1) region; sequence IPFATQLQAR…QVDRLITGRL (106 aa). Residues 822–866 adopt a coiled-coil conformation; that stretch reads QDVVNKQSAILTETMASLNKNFGAISSVIQEIYLQLDAIQANAQV. N-linked (GlcNAc...) asparagine; by host glycans are attached at residues Asn-947, Asn-960, Asn-979, Asn-1014, Asn-1051, Asn-1058, and Asn-1074. The segment at 1024-1105 is heptad repeat 2 (HR2); that stretch reads NDDFDFDDEL…VWLAIAFATI (82 aa). Positions 1055-1083 form a coiled coil; the sequence is PVLNITYDIDKIEEVIKGLNDSLIDLETL. A helical transmembrane segment spans residues 1096–1116; that stretch reads VWLAIAFATIIFILILGWVFF. At 1117–1162 the chain is on the cytoplasmic side; the sequence is MTGCCGCCCGCFGIIPLMSKCGKKSSYYTTFDNDVVTEQYRPKKSV. The Di-lysine motif motif lies at 1159–1162; it reads KKSV.

Belongs to the gammacoronaviruses spike protein family. Homotrimer; each monomer consists of a S1 and a S2 subunit. The resulting peplomers protrude from the virus surface as spikes. Specific enzymatic cleavages in vivo yield mature proteins. The precursor is processed into S1 and S2 by host cell furin or furin-like protease to yield the mature S1 and S2 proteins. The cleavage site between S1 and S2 requires the optimal sequence [KR]-X-[KR]-R. Additionally, a second cleavage leads to the release of a fusion peptide after viral attachment to host cell receptor.

The protein resides in the virion membrane. It localises to the host endoplasmic reticulum-Golgi intermediate compartment membrane. Attaches the virion to the host cell membrane by interacting with sialic acids, initiating the infection. Its function is as follows. Mediates fusion of the virion and cellular membranes by acting as a class I viral fusion protein. Under the current model, the protein has at least 3 conformational states: pre-fusion native state, pre-hairpin intermediate state, and post-fusion hairpin state. During viral and target cell membrane fusion, the coiled coil regions (heptad repeats) assume a trimer-of-hairpins structure, positioning the fusion peptide in close proximity to the C-terminal region of the ectodomain. The formation of this structure appears to drive apposition and subsequent fusion of viral and target cell membranes. Functionally, acts as a viral fusion peptide after S2 cleavage occurring upon virus endocytosis. The sequence is that of Spike glycoprotein from Avian infectious bronchitis virus (strain KB8523) (IBV).